A 191-amino-acid polypeptide reads, in one-letter code: MQLNELNCVILCGGKSSRMGQDKSKLILKNQNLTQFQVDKFSKIFKNVYVSAKEDKFENHFSLIKDSLEFEVYSPMLALYSILSNFKNEFVFVLSVDSPKVGENELLKMLPFLEQNYKIIIAKTPLHKHPLCGFYHSSLAQTCKNFLEKNEQKIGLLFSEIKTKFVEFEDEDAFLNLNFYEEYEKFKSKLK.

Residues 11 to 13, K23, D66, and D97 each bind GTP; that span reads LCG. A Mg(2+)-binding site is contributed by D97.

It belongs to the MobA family. In terms of assembly, monomer. Requires Mg(2+) as cofactor.

Its subcellular location is the cytoplasm. The enzyme catalyses Mo-molybdopterin + GTP + H(+) = Mo-molybdopterin guanine dinucleotide + diphosphate. Transfers a GMP moiety from GTP to Mo-molybdopterin (Mo-MPT) cofactor (Moco or molybdenum cofactor) to form Mo-molybdopterin guanine dinucleotide (Mo-MGD) cofactor. This is Molybdenum cofactor guanylyltransferase from Campylobacter jejuni subsp. jejuni serotype O:2 (strain ATCC 700819 / NCTC 11168).